A 131-amino-acid chain; its full sequence is Mediator of RNA polymerase II transcription subunit 31 (131 aa).

A2 is subject to N-acetylalanine.

This sequence belongs to the Mediator complex subunit 31 family. In terms of assembly, component of the Mediator complex, which is composed of MED1, MED4, MED6, MED7, MED8, MED9, MED10, MED11, MED12, MED13, MED13L, MED14, MED15, MED16, MED17, MED18, MED19, MED20, MED21, MED22, MED23, MED24, MED25, MED26, MED27, MED29, MED30, MED31, CCNC, CDK8 and CDC2L6/CDK11. The MED12, MED13, CCNC and CDK8 subunits form a distinct module termed the CDK8 module. Mediator containing the CDK8 module is less active than Mediator lacking this module in supporting transcriptional activation. Individual preparations of the Mediator complex lacking one or more distinct subunits have been variously termed ARC, CRSP, DRIP, PC2, SMCC and TRAP.

The protein localises to the nucleus. Its function is as follows. Component of the Mediator complex, a coactivator involved in the regulated transcription of nearly all RNA polymerase II-dependent genes. Mediator functions as a bridge to convey information from gene-specific regulatory proteins to the basal RNA polymerase II transcription machinery. Mediator is recruited to promoters by direct interactions with regulatory proteins and serves as a scaffold for the assembly of a functional preinitiation complex with RNA polymerase II and the general transcription factors. This is Mediator of RNA polymerase II transcription subunit 31 (MED31) from Homo sapiens (Human).